We begin with the raw amino-acid sequence, 434 residues long: tRNA modification GTPase MnmE (434 aa).

3 residues coordinate (6S)-5-formyl-5,6,7,8-tetrahydrofolate: R20, E79, and V119. The TrmE-type G domain maps to 219 to 361; sequence GLRVVLAGRP…LQEKLVEIGK (143 aa). Residues 229–234, 248–254, and 273–276 contribute to the GTP site; these read NAGKST, APIAGTT, and DTAG. Positions 233 and 254 each coordinate Mg(2+). K434 contributes to the (6S)-5-formyl-5,6,7,8-tetrahydrofolate binding site.

The protein belongs to the TRAFAC class TrmE-Era-EngA-EngB-Septin-like GTPase superfamily. TrmE GTPase family. Homodimer. Heterotetramer of two MnmE and two MnmG subunits. K(+) is required as a cofactor.

The protein resides in the cytoplasm. Exhibits a very high intrinsic GTPase hydrolysis rate. Involved in the addition of a carboxymethylaminomethyl (cmnm) group at the wobble position (U34) of certain tRNAs, forming tRNA-cmnm(5)s(2)U34. The protein is tRNA modification GTPase MnmE of Zymomonas mobilis subsp. mobilis (strain ATCC 31821 / ZM4 / CP4).